The chain runs to 314 residues: Formate-nitrite transporter (314 aa).

The Cytoplasmic segment spans residues 1-47 (MQKSTSKYVIDPISIKTNCSSEESYIRCVEYGKGKAHYRNLILLAKA). The chain crosses the membrane as a helical span at residues 48–68 (ILAGVFVGVCAHASGIAGGLF). The Extracellular portion of the chain corresponds to 69–77 (YYHKLREYV). A helical transmembrane segment spans residues 78–98 (GISMSAFVYGFTFPIAFLCII). At 99–128 (CTGSDLFTGNTLAVTTALLQKKLGLLCYMR) the chain is on the cytoplasmic side. Residues 129-149 (VMCISLVGNYIGAVAFAFFVS) traverse the membrane as a helical segment. Residues 150–185 (YGSGAFSINTDTSKNHIFQFLNDIAIKKVSHSFIEC) lie on the Extracellular side of the membrane. Residues 186 to 206 (ICLAIGCNIFVCLAVYFVLSI) traverse the membrane as a helical segment. Residues 207-211 (KDGSG) are Cytoplasmic-facing. A helical transmembrane segment spans residues 212 to 232 (LVFSVFFAVYAFAIAGYEHII). The Extracellular portion of the chain corresponds to 233–260 (ANIYTLNLALMISNDISFTQVYFKNLLP). A helical membrane pass occupies residues 261-281 (TLIGNYIAGGLVLAFPLFFIY). Topologically, residues 282–314 (RSCYYDYDKMNDELNTVVLKTLSLELQNESNHI) are cytoplasmic.

It belongs to the FNT transporter (TC 1.A.16) family. Homopentamer.

It localises to the cell membrane. Its subcellular location is the vacuole membrane. The enzyme catalyses (S)-lactate(in) + H(+)(in) = (S)-lactate(out) + H(+)(out). It carries out the reaction formate(in) + H(+)(in) = formate(out) + H(+)(out). It catalyses the reaction pyruvate(out) + H(+)(out) = pyruvate(in) + H(+)(in). The catalysed reaction is acetate(out) + H(+)(out) = acetate(in) + H(+)(in). Its activity is regulated as follows. Inhibited by the Malaria Box compound MMV007839 and its derivatives BH296 and BH267.meta. Functionally, monocarboxylate-proton symporter that mediates the efflux of the waste product lactate in the intraerythrocytic parasites; active in acidic-to-neutral pH range. Transports L-lactate. This Plasmodium malariae protein is Formate-nitrite transporter.